A 148-amino-acid polypeptide reads, in one-letter code: Large-conductance mechanosensitive channel (148 aa).

2 helical membrane-spanning segments follow: residues 16–36 (VMDL…VNSI) and 89–109 (GSFI…FLMV).

It belongs to the MscL family. In terms of assembly, homopentamer.

The protein localises to the cell inner membrane. Functionally, channel that opens in response to stretch forces in the membrane lipid bilayer. May participate in the regulation of osmotic pressure changes within the cell. The sequence is that of Large-conductance mechanosensitive channel from Paraburkholderia xenovorans (strain LB400).